We begin with the raw amino-acid sequence, 119 residues long: Flagellar transcriptional regulator FlhD (119 aa).

It belongs to the FlhD family. In terms of assembly, homodimer; disulfide-linked. Forms a heterohexamer composed of two FlhC and four FlhD subunits. Each FlhC binds a FlhD dimer, forming a heterotrimer, and a hexamer assembles by dimerization of two heterotrimers.

It is found in the cytoplasm. Its function is as follows. Functions in complex with FlhC as a master transcriptional regulator that regulates transcription of several flagellar and non-flagellar operons by binding to their promoter region. Activates expression of class 2 flagellar genes, including fliA, which is a flagellum-specific sigma factor that turns on the class 3 genes. Also regulates genes whose products function in a variety of physiological pathways. This is Flagellar transcriptional regulator FlhD from Cronobacter sakazakii (strain ATCC BAA-894) (Enterobacter sakazakii).